Here is an 85-residue protein sequence, read N- to C-terminus: U4-theraphotoxin-Hhn1s (85 aa).

The N-terminal stretch at 1–22 is a signal peptide; the sequence is MKVTLIAILTCAAVLVLHTTAA. A propeptide spanning residues 23–48 is cleaved from the precursor; it reads EELEAESQLMEVGMPDTELAAVDEER. Intrachain disulfides connect Cys-52–Cys-66, Cys-56–Cys-77, and Cys-71–Cys-82.

This sequence belongs to the neurotoxin 12 (Hwtx-2) family. 02 (Hwtx-2) subfamily. As to expression, expressed by the venom gland.

The protein localises to the secreted. In terms of biological role, postsynaptic neurotoxin. This chain is U4-theraphotoxin-Hhn1s, found in Cyriopagopus hainanus (Chinese bird spider).